A 122-amino-acid polypeptide reads, in one-letter code: Sterile alpha motif domain-containing protein 13 (122 aa).

In terms of domain architecture, SAM spans 51-119 (WAVMDVVNYF…KPLQTKHLKN (69 aa)).

In Homo sapiens (Human), this protein is Sterile alpha motif domain-containing protein 13 (SAMD13).